The chain runs to 109 residues: Thioredoxin 2 (109 aa).

The region spanning 2 to 109 (SGKYFEATDQ…IAKKLDEHIG (108 aa)) is the Thioredoxin domain. The cysteines at positions 33 and 36 are disulfide-linked.

Belongs to the thioredoxin family.

Functionally, participates in various redox reactions through the reversible oxidation of its active center dithiol to a disulfide and catalyzes dithiol-disulfide exchange reactions. This chain is Thioredoxin 2 (trx2), found in Chlorobaculum tepidum (strain ATCC 49652 / DSM 12025 / NBRC 103806 / TLS) (Chlorobium tepidum).